The primary structure comprises 119 residues: uncharacterized protein (119 aa).

This is an uncharacterized protein from Ureaplasma parvum serovar 3 (strain ATCC 700970).